We begin with the raw amino-acid sequence, 129 residues long: Thyroid hormone receptor alpha (129 aa).

Residues 26–129 (AEWELIRMVT…EIMSLRAAVR (104 aa)) enclose the NR LBD domain. 3,3',5-triiodo-L-thyronine is bound at residue Arg91.

This sequence belongs to the nuclear hormone receptor family. NR1 subfamily.

It is found in the nucleus. Nuclear hormone receptor that can act as a repressor or activator of transcription. High affinity receptor for thyroid hormones, including triiodothyronine and thyroxine. The protein is Thyroid hormone receptor alpha (thra1) of Sparus aurata (Gilthead sea bream).